A 75-amino-acid polypeptide reads, in one-letter code: Translation initiation factor IF-1, chloroplastic (75 aa).

Belongs to the IF-1 family. As to quaternary structure, component of the 30S ribosomal translation pre-initiation complex which assembles on the 30S ribosome in the order IF-2 and IF-3, IF-1 and N-formylmethionyl-tRNA(fMet); mRNA recruitment can occur at any time during PIC assembly.

It is found in the plastid. The protein resides in the chloroplast. Its function is as follows. One of the essential components for the initiation of protein synthesis. Stabilizes the binding of IF-2 and IF-3 on the 30S subunit to which N-formylmethionyl-tRNA(fMet) subsequently binds. Helps modulate mRNA selection, yielding the 30S pre-initiation complex (PIC). Upon addition of the 50S ribosomal subunit IF-1, IF-2 and IF-3 are released leaving the mature 70S translation initiation complex. In Cucumis sativus (Cucumber), this protein is Translation initiation factor IF-1, chloroplastic (infA).